A 552-amino-acid chain; its full sequence is Non-structural protein NS1 (552 aa).

The protein belongs to the orbivirus non-structural protein NS1 family.

This is Non-structural protein NS1 (Segment-5) from Bluetongue virus 13 (isolate USA) (BTV 13).